The chain runs to 429 residues: Light-independent protochlorophyllide reductase subunit N (429 aa).

Positions 32, 57, and 118 each coordinate [4Fe-4S] cluster.

It belongs to the BchN/ChlN family. As to quaternary structure, protochlorophyllide reductase is composed of three subunits; BchL, BchN and BchB. Forms a heterotetramer of two BchB and two BchN subunits. Requires [4Fe-4S] cluster as cofactor.

The catalysed reaction is chlorophyllide a + oxidized 2[4Fe-4S]-[ferredoxin] + 2 ADP + 2 phosphate = protochlorophyllide a + reduced 2[4Fe-4S]-[ferredoxin] + 2 ATP + 2 H2O. It participates in porphyrin-containing compound metabolism; bacteriochlorophyll biosynthesis (light-independent). Component of the dark-operative protochlorophyllide reductase (DPOR) that uses Mg-ATP and reduced ferredoxin to reduce ring D of protochlorophyllide (Pchlide) to form chlorophyllide a (Chlide). This reaction is light-independent. The NB-protein (BchN-BchB) is the catalytic component of the complex. In Rhodopseudomonas palustris (strain TIE-1), this protein is Light-independent protochlorophyllide reductase subunit N.